A 300-amino-acid polypeptide reads, in one-letter code: Formylmethanofuran--tetrahydromethanopterin formyltransferase-like protein (300 aa).

It belongs to the FTR family.

The polypeptide is Formylmethanofuran--tetrahydromethanopterin formyltransferase-like protein (Methanopyrus kandleri (strain AV19 / DSM 6324 / JCM 9639 / NBRC 100938)).